The chain runs to 360 residues: Dihydroorotate dehydrogenase (quinone) (360 aa).

Residues 66–70 (AGFDK) and T90 contribute to the FMN site. A substrate-binding site is contributed by K70. 115-119 (NRMGF) contributes to the substrate binding site. FMN-binding residues include N143 and N176. Residue N176 participates in substrate binding. S179 functions as the Nucleophile in the catalytic mechanism. A substrate-binding site is contributed by N181. FMN is bound by residues K212 and T240. A substrate-binding site is contributed by 241–242 (NT). FMN is bound by residues G264, G293, and 314-315 (YT).

This sequence belongs to the dihydroorotate dehydrogenase family. Type 2 subfamily. As to quaternary structure, monomer. The cofactor is FMN.

The protein resides in the cell membrane. It carries out the reaction (S)-dihydroorotate + a quinone = orotate + a quinol. Its pathway is pyrimidine metabolism; UMP biosynthesis via de novo pathway; orotate from (S)-dihydroorotate (quinone route): step 1/1. Catalyzes the conversion of dihydroorotate to orotate with quinone as electron acceptor. The sequence is that of Dihydroorotate dehydrogenase (quinone) from Mycobacterium marinum (strain ATCC BAA-535 / M).